Consider the following 142-residue polypeptide: Deoxyuridine 5'-triphosphate nucleotidohydrolase (142 aa).

Residues 62 to 64 (RSG), asparagine 75, and 79 to 81 (TID) each bind substrate.

It belongs to the dUTPase family. Mg(2+) serves as cofactor.

It carries out the reaction dUTP + H2O = dUMP + diphosphate + H(+). The protein operates within pyrimidine metabolism; dUMP biosynthesis; dUMP from dCTP (dUTP route): step 2/2. This enzyme is involved in nucleotide metabolism: it produces dUMP, the immediate precursor of thymidine nucleotides and it decreases the intracellular concentration of dUTP so that uracil cannot be incorporated into DNA. This chain is Deoxyuridine 5'-triphosphate nucleotidohydrolase, found in Clostridium novyi (strain NT).